A 510-amino-acid polypeptide reads, in one-letter code: MDEFQRYGNKHKSWQQCFLYPLFFREDLYTIAHDLYLDKSSSSEPTELSISNFFSFPTVKRLIRRIRQQNDSNSIGLFRNCDPNRFINRNRNSYSELVLEGLTVILEVSLAMQSKHFIEGMDGWKSIRSIHCIFTLMEDKFPYSNYVSDIRVPYSIHPEILVRTFRRWIRDAPSLHLLRSILHEWRNSFSAENLQKALVPPRENRRFSLFLWNSYVYECESFLVSLLKQFYHSRSLLYGSFPDRTHFDKKIKHIVIFPVKISTKRIWLLKYPFIYYVRYGERSLIALKGTHLQVKRCRYHLFNFWQYYFHLWSQPYRVCILELSKIYFYFLGHFLSFKMKTLVVRTKMLDDLLISDIIANEFNPIAPIRSILLYLTKERFCDISGQPISRLSWTNLSDDDILDRFDRMCRNIFHYYSGSINKDGLYYIKYILLLPCAKTLACKHKSTIRVVREESGSELFTKSFSKEREFIYSSFSKTCSQRERNWNSDIIQINILVNYWQKIHNKQIEK.

This sequence belongs to the intron maturase 2 family. MatK subfamily.

Its subcellular location is the plastid. It is found in the chloroplast. Usually encoded in the trnK tRNA gene intron. Probably assists in splicing its own and other chloroplast group II introns. The protein is Maturase K of Taxus cuspidata (Japanese yew).